The primary structure comprises 382 residues: Lipid-A-disaccharide synthase (382 aa).

It belongs to the LpxB family.

It catalyses the reaction 2-N,3-O-bis[(3R)-3-hydroxytetradecanoyl]-alpha-D-glucosaminyl 1-phosphate + UDP-2-N,3-O-bis[(3R)-3-hydroxytetradecanoyl]-alpha-D-glucosamine = lipid A disaccharide (E. coli) + UDP + H(+). The catalysed reaction is a lipid X + a UDP-2-N,3-O-bis[(3R)-3-hydroxyacyl]-alpha-D-glucosamine = a lipid A disaccharide + UDP + H(+). Its pathway is glycolipid biosynthesis; lipid IV(A) biosynthesis; lipid IV(A) from (3R)-3-hydroxytetradecanoyl-[acyl-carrier-protein] and UDP-N-acetyl-alpha-D-glucosamine: step 5/6. Functionally, condensation of UDP-2,3-diacylglucosamine and 2,3-diacylglucosamine-1-phosphate to form lipid A disaccharide, a precursor of lipid A, a phosphorylated glycolipid that anchors the lipopolysaccharide to the outer membrane of the cell. The polypeptide is Lipid-A-disaccharide synthase (Salmonella arizonae (strain ATCC BAA-731 / CDC346-86 / RSK2980)).